We begin with the raw amino-acid sequence, 109 residues long: Ubiquitin-related modifier 1 homolog (109 aa).

A 1-thioglycine modification is found at G109. A Glycyl lysine isopeptide (Gly-Lys) (interchain with K-? in acceptor proteins) cross-link involves residue G109.

This sequence belongs to the URM1 family. Post-translationally, C-terminal thiocarboxylation occurs in 2 steps, it is first acyl-adenylated (-COAMP) via the hesA/moeB/thiF part of the MOCS3 homolog, then thiocarboxylated (-COSH) via the rhodanese domain of the MOCS3 homolog.

It localises to the cytoplasm. It functions in the pathway tRNA modification; 5-methoxycarbonylmethyl-2-thiouridine-tRNA biosynthesis. Acts as a sulfur carrier required for 2-thiolation of mcm(5)S(2)U at tRNA wobble positions of cytosolic tRNA(Lys), tRNA(Glu) and tRNA(Gln). Serves as sulfur donor in tRNA 2-thiolation reaction by being thiocarboxylated (-COSH) at its C-terminus by MOCS3. The sulfur is then transferred to tRNA to form 2-thiolation of mcm(5)S(2)U. Also acts as a ubiquitin-like protein (UBL) that is covalently conjugated via an isopeptide bond to lysine residues of target proteins. The thiocarboxylated form serves as substrate for conjugation and oxidative stress specifically induces the formation of UBL-protein conjugates. The chain is Ubiquitin-related modifier 1 homolog from Culex quinquefasciatus (Southern house mosquito).